The primary structure comprises 75 residues: Putative UPF0377 protein YJL222W-A (75 aa).

It belongs to the UPF0377 family.

The polypeptide is Putative UPF0377 protein YJL222W-A (Saccharomyces cerevisiae (strain ATCC 204508 / S288c) (Baker's yeast)).